Reading from the N-terminus, the 510-residue chain is ARVKSENLLKKPVVKWFKGKWMDLGTKVGKHLQLQETYDRNTKIYTFEIHIIKAKTTYAGGYRCEAVSKDKFDSCNFNLNMHEASNAGEVDIRSAFRRTGDGKEEAGELDFSALLKKRDSFLLCESRQMKAEGHPRLMSGKSEGASPSEYEKIAFQYGITDLRGLLKRLKKMKKEEKKSTAFLKKLDPAYQVDKGQKIKLVVEVANPDAEVKWKKNGQDIKSSRTKYIFESIGNKRILTINHCSLADDAAYECVIGDEKCFTELFVKEPPYSSHAPLEDQMVMVGERVEFECEVSEEGAQVKWEKDGAELTREETFNYRFKKDGWQETYLLINEPTKEDSGHYTVKTNGWESVANLWVQEKSVLEVLQEVADLTVMARDQAVFKCEVSDENVKGVWVKNGKEVVPNDRITIRHIGRTHKLTIDNVVVAEDEGDYSFIPDGFAFNLSAKLKFLEIKIDFVPRQEPPKINLDVMGPAADTIVVVAGNKLRLDVPISGTPAPTVIWTKGNKVG.

Ig-like C2-type domains follow at residues 177–269 (KKST…VKEP), 270–347 (PYSS…TVKT), and 378–438 (RDQA…SFIP).

The protein belongs to the immunoglobulin superfamily. MyBP family. In terms of tissue distribution, heart.

In terms of biological role, thick filament-associated protein located in the crossbridge region of vertebrate striated muscle a bands. In vitro it binds MHC, F-actin and native thin filaments, and modifies the activity of actin-activated myosin ATPase. It may modulate muscle contraction or may play a more structural role. In Ambystoma mexicanum (Axolotl), this protein is Myosin-binding protein C, cardiac-type.